Reading from the N-terminus, the 305-residue chain is NAD kinase (305 aa).

Asp84 (proton acceptor) is an active-site residue. NAD(+) is bound by residues 84-85 (DG), 159-160 (NE), His170, Arg187, Asp189, 200-205 (TAYSLS), and Gln260.

It belongs to the NAD kinase family. It depends on a divalent metal cation as a cofactor.

The protein localises to the cytoplasm. The catalysed reaction is NAD(+) + ATP = ADP + NADP(+) + H(+). Involved in the regulation of the intracellular balance of NAD and NADP, and is a key enzyme in the biosynthesis of NADP. Catalyzes specifically the phosphorylation on 2'-hydroxyl of the adenosine moiety of NAD to yield NADP. The polypeptide is NAD kinase (Pasteurella multocida (strain Pm70)).